The primary structure comprises 60 residues: Mastoparan-VT3 (60 aa).

The signal sequence occupies residues 1-27 (MKNTILILFTAFIALLGFFGMSAEALA). 4 AXPX repeats span residues 27–30 (ADPK), 31–34 (ADPL), 35–38 (AGPN), and 41–44 (ADPE). Residues 28 to 45 (DPKADPLAGPNPDADPEA) constitute a propeptide that is removed on maturation. Leucine 59 is modified (leucine amide).

The protein belongs to the MCD family. Mastoparan subfamily. In terms of tissue distribution, expressed by the venom gland.

It is found in the secreted. Its function is as follows. The synthetic peptide shows antimicrobial activities against Gram-negative bacteria (but not against all strains tested), Gram-positive bacteria (all strains tested) and the fungi C.albicans and C.parapsilosis. Exhibits moderate hemolytic activity (25% at 100 ug/ml) against washed human erythrocytes. In Vespa tropica (Greater banded hornet), this protein is Mastoparan-VT3.